Reading from the N-terminus, the 342-residue chain is Ribosomal RNA small subunit methyltransferase C (342 aa).

The protein belongs to the methyltransferase superfamily. RsmC family. Monomer.

It is found in the cytoplasm. The catalysed reaction is guanosine(1207) in 16S rRNA + S-adenosyl-L-methionine = N(2)-methylguanosine(1207) in 16S rRNA + S-adenosyl-L-homocysteine + H(+). In terms of biological role, specifically methylates the guanine in position 1207 of 16S rRNA in the 30S particle. This is Ribosomal RNA small subunit methyltransferase C from Salmonella arizonae (strain ATCC BAA-731 / CDC346-86 / RSK2980).